We begin with the raw amino-acid sequence, 270 residues long: Tryptophan synthase alpha chain (270 aa).

Catalysis depends on proton acceptor residues E49 and D60.

It belongs to the TrpA family. As to quaternary structure, tetramer of two alpha and two beta chains.

The catalysed reaction is (1S,2R)-1-C-(indol-3-yl)glycerol 3-phosphate + L-serine = D-glyceraldehyde 3-phosphate + L-tryptophan + H2O. The protein operates within amino-acid biosynthesis; L-tryptophan biosynthesis; L-tryptophan from chorismate: step 5/5. In terms of biological role, the alpha subunit is responsible for the aldol cleavage of indoleglycerol phosphate to indole and glyceraldehyde 3-phosphate. This Paraburkholderia phytofirmans (strain DSM 17436 / LMG 22146 / PsJN) (Burkholderia phytofirmans) protein is Tryptophan synthase alpha chain.